Consider the following 513-residue polypeptide: MQLNSTEISELIKQRIAQFNVVSEAHNEGTIVSVSDGVIRIHGLADCMQGEMISLPGNRYAIALNLERDSVGAVVMGPYADLAEGMKVKCTGRILEVPVGRGLLGRVVNTLGAPIDGKGPVEHDGFSAVEAIAPGVIERQSVDQPVQTGYKAVDSMIPIGRGQRELIIGDRQTGKTALAIDAIINQRDSGIKCVYVAIGQKASTISNVVRKLEEHGALQNTIVVVATASESAALQYLAPYAGCAMGEYFRDRGEDALIIYDDLSKQAVAYRQISLLLRRPPGREAFPGDVFYLHSRLLERAARVNVEYVEAFTKGEVKGKTGSLTALPIIETQAGDVSAFVPTNVISITDGQIFLETNLFNSGIRPAVNPGISVSRVGGAAQTKIMKKLSGGIRTALAQYRELAAFSQFASDLDDATRKQLDHGQKVTELLKQKQYAPMSVAQQSLVLFAAERGYLADVELAKIGSFEAALLAYVDRDHAPLMQEINQSGGYNDEIEGKLKGILDSFKATQSW.

Residue 169-176 (GDRQTGKT) participates in ATP binding.

It belongs to the ATPase alpha/beta chains family. F-type ATPases have 2 components, CF(1) - the catalytic core - and CF(0) - the membrane proton channel. CF(1) has five subunits: alpha(3), beta(3), gamma(1), delta(1), epsilon(1). CF(0) has three main subunits: a(1), b(2) and c(9-12). The alpha and beta chains form an alternating ring which encloses part of the gamma chain. CF(1) is attached to CF(0) by a central stalk formed by the gamma and epsilon chains, while a peripheral stalk is formed by the delta and b chains.

Its subcellular location is the cell inner membrane. It carries out the reaction ATP + H2O + 4 H(+)(in) = ADP + phosphate + 5 H(+)(out). Produces ATP from ADP in the presence of a proton gradient across the membrane. The alpha chain is a regulatory subunit. This chain is ATP synthase subunit alpha, found in Citrobacter koseri (strain ATCC BAA-895 / CDC 4225-83 / SGSC4696).